We begin with the raw amino-acid sequence, 784 residues long: DNA ligase (784 aa).

Residues 35 to 39 (DAEYD), 84 to 85 (SL), and glutamate 117 contribute to the NAD(+) site. The N6-AMP-lysine intermediate role is filled by lysine 119. 4 residues coordinate NAD(+): arginine 140, glutamate 177, lysine 294, and lysine 318. Zn(2+) is bound by residues cysteine 412, cysteine 415, cysteine 442, and cysteine 448. In terms of domain architecture, BRCT spans 703 to 784 (AEGLPLAGQT…FLALLRQLES (82 aa)).

Belongs to the NAD-dependent DNA ligase family. LigA subfamily. Requires Mg(2+) as cofactor. The cofactor is Mn(2+).

It carries out the reaction NAD(+) + (deoxyribonucleotide)n-3'-hydroxyl + 5'-phospho-(deoxyribonucleotide)m = (deoxyribonucleotide)n+m + AMP + beta-nicotinamide D-nucleotide.. Functionally, DNA ligase that catalyzes the formation of phosphodiester linkages between 5'-phosphoryl and 3'-hydroxyl groups in double-stranded DNA using NAD as a coenzyme and as the energy source for the reaction. It is essential for DNA replication and repair of damaged DNA. This chain is DNA ligase, found in Azotobacter vinelandii (strain DJ / ATCC BAA-1303).